The following is a 543-amino-acid chain: Ribosomal protein arginine N-methyltransferase rmt3 (543 aa).

The segment at 58–81 (FCCLFCDSTFTCLKDLWSHCKEAH) adopts a C2H2-type zinc-finger fold. One can recognise an SAM-dependent MTase PRMT-type domain in the interval 217 to 543 (DSYYFESYAG…KADSQSYVLN (327 aa)). The S-adenosyl-L-homocysteine site is built by Arg-239, Gly-263, Asp-285, Ser-287, Ile-313, and Glu-314. Residues Glu-329 and Glu-338 contribute to the active site.

The protein belongs to the class I-like SAM-binding methyltransferase superfamily. Protein arginine N-methyltransferase family. As to quaternary structure, interacts with ef1a-c, rps2 and rps24. Note=Associates with the 40S ribosomal particle.

The protein localises to the cytoplasm. The protein resides in the cytosol. It catalyses the reaction L-arginyl-[protein] + S-adenosyl-L-methionine = N(omega)-methyl-L-arginyl-[protein] + S-adenosyl-L-homocysteine + H(+). The catalysed reaction is L-arginyl-[protein] + 2 S-adenosyl-L-methionine = N(omega),N(omega)-dimethyl-L-arginyl-[protein] + 2 S-adenosyl-L-homocysteine + 2 H(+). Functionally, methylates (mono and asymmetric dimethylation) the guanidino nitrogens of arginyl residues in ribosomal protein rps2. This is Ribosomal protein arginine N-methyltransferase rmt3 (rmt3) from Schizosaccharomyces pombe (strain 972 / ATCC 24843) (Fission yeast).